We begin with the raw amino-acid sequence, 378 residues long: Rhodopsin (378 aa).

Residues 1–53 (MMSIASGPSHAAYTWASQGGGFGNQTVVDKVPPEMLHMVDAHWYQFPPMNPLW) lie on the Extracellular side of the membrane. The N-linked (GlcNAc...) asparagine glycan is linked to Asn24. The helical transmembrane segment at 54-78 (HALLGFVIGVLGVISVIGNGMVIYI) threads the bilayer. The Cytoplasmic segment spans residues 79 to 90 (FTTTKSLRTPSN). A helical membrane pass occupies residues 91–115 (LLVVNLAISDFLMMLCMSPAMVINC). Residues 116 to 130 (YYETWVLGPLFCELY) lie on the Extracellular side of the membrane. Cys127 and Cys204 are disulfide-bonded. Residues 131–150 (GLAGSLFGCASIWTMTMIAF) form a helical membrane-spanning segment. The Cytoplasmic portion of the chain corresponds to 151–169 (DRYNVIVKGLSAKPMTING). Residues 170–193 (ALIRILTIWFFTLAWTIAPMFGWN) form a helical membrane-spanning segment. The Extracellular segment spans residues 194–217 (RYVPEGNMTACGTDYLTKDLFSRS). An N-linked (GlcNAc...) asparagine glycan is attached at Asn200. A helical transmembrane segment spans residues 218-245 (YILIYSIFVYFTPLFLIIYSYFFIIQAV). Topologically, residues 246–280 (AAHEKNMREQAKKMNVASLRSAENQSTSAECKLAK) are cytoplasmic. The chain crosses the membrane as a helical span at residues 281 to 304 (VALMTISLWFMAWTPYLVINYSGI). The Extracellular segment spans residues 305–311 (FETTKIS). A helical transmembrane segment spans residues 312–336 (PLFTIWGSLFAKANAVYNPIVYGIS). Lys323 carries the N6-(retinylidene)lysine modification. The Cytoplasmic portion of the chain corresponds to 337–378 (HPKYRAALFQKFPSLACTTEPTGADTMSTTTTVTEGNEKPAA).

The protein belongs to the G-protein coupled receptor 1 family. Opsin subfamily. In terms of processing, phosphorylated on some or all of the serine and threonine residues present in the C-terminal region.

The protein resides in the membrane. In terms of biological role, visual pigments are the light-absorbing molecules that mediate vision. They consist of an apoprotein, opsin, covalently linked to cis-retinal. The polypeptide is Rhodopsin (Camponotus atriceps (Florida carpenter ant)).